We begin with the raw amino-acid sequence, 326 residues long: MGVQFGDFIPKNIISFEDLKGKKVAIDGMNALYQFLTSIRLRDGSPLRNRKGEITSAYNGVFYKTIHLLENDITPIWVFDGEPPKLKEKTRKVRREMKEKAELKMKEAIKKEDFEEAAKYAKRVSYLTPKMVENCKYLLSLMGIPYVEAPSEGEAQASYMAKKGDVWAVVSQDYDALLYGAPRVVRNLTTTKEMPELIELNEVLEDLRISLDDLIDIAIFMGTDYNPGGVKGIGFKRAYELVRSGVAKDVLKKEVEYYDEIKRIFKEPKVTDNYSLSLKLPDKEGIIKFLVDENDFNYDRVKKHVDKLYNLIANKTKQKTLDAWFK.

Residues 1 to 98 are N-domain; the sequence is MGVQFGDFIP…KTRKVRREMK (98 aa). The Mg(2+) site is built by D27, D80, E152, E154, D173, D175, and D224. The interval 116-245 is I-domain; that stretch reads EAAKYAKRVS…KRAYELVRSG (130 aa). Residues 317–325 are interaction with PCNA; that stretch reads KQKTLDAWF.

This sequence belongs to the XPG/RAD2 endonuclease family. FEN1 subfamily. Interacts with PCNA. PCNA stimulates the nuclease activity without altering cleavage specificity. Mg(2+) serves as cofactor.

Its function is as follows. Structure-specific nuclease with 5'-flap endonuclease and 5'-3' exonuclease activities involved in DNA replication and repair. During DNA replication, cleaves the 5'-overhanging flap structure that is generated by displacement synthesis when DNA polymerase encounters the 5'-end of a downstream Okazaki fragment. Binds the unpaired 3'-DNA end and kinks the DNA to facilitate 5' cleavage specificity. Cleaves one nucleotide into the double-stranded DNA from the junction in flap DNA, leaving a nick for ligation. Also involved in the base excision repair (BER) pathway. Acts as a genome stabilization factor that prevents flaps from equilibrating into structures that lead to duplications and deletions. Also possesses 5'-3' exonuclease activity on nicked or gapped double-stranded DNA. This Methanocaldococcus jannaschii (strain ATCC 43067 / DSM 2661 / JAL-1 / JCM 10045 / NBRC 100440) (Methanococcus jannaschii) protein is Flap endonuclease 1.